The following is a 338-amino-acid chain: UDP-N-acetylenolpyruvoylglucosamine reductase (338 aa).

One can recognise an FAD-binding PCMH-type domain in the interval 17-188; sequence IAARTDWWID…MYVDYRLRLR (172 aa). Arg164 is a catalytic residue. Ser237 functions as the Proton donor in the catalytic mechanism. Residue Glu333 is part of the active site.

Belongs to the MurB family. The cofactor is FAD.

The protein localises to the cytoplasm. The enzyme catalyses UDP-N-acetyl-alpha-D-muramate + NADP(+) = UDP-N-acetyl-3-O-(1-carboxyvinyl)-alpha-D-glucosamine + NADPH + H(+). The protein operates within cell wall biogenesis; peptidoglycan biosynthesis. Cell wall formation. The polypeptide is UDP-N-acetylenolpyruvoylglucosamine reductase (Porphyromonas gingivalis (strain ATCC 33277 / DSM 20709 / CIP 103683 / JCM 12257 / NCTC 11834 / 2561)).